Consider the following 96-residue polypeptide: UPF0235 protein SO_3356 (96 aa).

Belongs to the UPF0235 family.

This is UPF0235 protein SO_3356 from Shewanella oneidensis (strain ATCC 700550 / JCM 31522 / CIP 106686 / LMG 19005 / NCIMB 14063 / MR-1).